We begin with the raw amino-acid sequence, 66 residues long: Large ribosomal subunit protein bL31 (66 aa).

Zn(2+) is bound by residues C16, C18, C36, and C39.

Belongs to the bacterial ribosomal protein bL31 family. Type A subfamily. In terms of assembly, part of the 50S ribosomal subunit. It depends on Zn(2+) as a cofactor.

In terms of biological role, binds the 23S rRNA. The chain is Large ribosomal subunit protein bL31 from Pelobacter propionicus (strain DSM 2379 / NBRC 103807 / OttBd1).